We begin with the raw amino-acid sequence, 162 residues long: Small ribosomal subunit protein uS19 (162 aa).

Basic residues predominate over residues 1–27 (MAKQKKFSGKGSARSKRKQNRKQVGPR). The interval 1 to 29 (MAKQKKFSGKGSARSKRKQNRKQVGPRRR) is disordered.

This sequence belongs to the universal ribosomal protein uS19 family.

Protein S19 forms a complex with S13 that binds strongly to the 16S ribosomal RNA. This chain is Small ribosomal subunit protein uS19, found in Methanococcus aeolicus (strain ATCC BAA-1280 / DSM 17508 / OCM 812 / Nankai-3).